Reading from the N-terminus, the 157-residue chain is Probable calcium-binding protein CML23 (157 aa).

EF-hand domains are found at residues 11 to 46 (GSME…LSPN), 47 to 82 (ASQE…SDQS), 86 to 121 (SAIR…LGEK), and 122 to 157 (CSIQ…NGSA). 19 residues coordinate Ca(2+): Asp-24, Asn-26, Asp-28, Lys-30, Glu-35, Asp-60, Asp-62, Asn-64, Glu-71, Asp-99, Asp-101, Asn-103, Arg-105, Glu-110, Asp-135, Asp-137, Asp-139, Cys-141, and Glu-146.

In terms of biological role, potential calcium sensor. The polypeptide is Probable calcium-binding protein CML23 (CML23) (Arabidopsis thaliana (Mouse-ear cress)).